The primary structure comprises 182 residues: T-cell surface glycoprotein CD3 gamma chain (182 aa).

A signal peptide spans 1-22; sequence MEQGKGLAGLFLVISLLQGTMA. Residues 23-116 lie on the Extracellular side of the membrane; that stretch reads QQKEEKHLVK…CIELNMGTVS (94 aa). The region spanning 37–94 is the Ig-like domain; the sequence is QGDGSVLLTCDFNEKTITWLKDGHRISPPNATKSTWNLGNGAKDPRGMYQCRGAKKKS. The cysteines at positions 46 and 87 are disulfide-linked. An N-linked (GlcNAc...) asparagine glycan is attached at N66. Residues 117–137 form a helical membrane-spanning segment; the sequence is GFIFAEIISIFFLAVGVYFIA. Residues 138–182 are Cytoplasmic-facing; it reads GQDGVRQSRASDKQTLLQNEQVYQPLKDREYEQYSRLQGNQVRKK. Position 145 is a phosphoserine (S145). The residue at position 148 (S148) is a Phosphoserine; by PKC. Positions 149-177 constitute an ITAM domain; it reads DKQTLLQNEQVYQPLKDREYEQYSRLQGN. The short motif at 153–154 is the Di-leucine motif element; sequence LL.

As to quaternary structure, the TCR-CD3 complex is composed of a CD3D/CD3E and a CD3G/CD3E heterodimers that preferentially associate with TCRalpha and TCRbeta, respectively, to form TCRalpha/CD3E/CD3G and TCRbeta/CD3G/CD3E trimers. In turn, the hexamer interacts with CD3Z homodimer to form the TCR-CD3 complex. Alternatively, TCRalpha and TCRbeta can be replaced by TCRgamma and TCRdelta. Phosphorylated on Tyr residues after T-cell receptor triggering by LCK in association with CD4/CD8. Phosphorylated also by PKC; leading to the TCR complex down-regulation. In terms of processing, phosphorylated on Tyr residues after T-cell receptor triggering by LCK in association with CD4/CD8.

It is found in the cell membrane. Functionally, part of the TCR-CD3 complex present on T-lymphocyte cell surface that plays an essential role in adaptive immune response. When antigen presenting cells (APCs) activate T-cell receptor (TCR), TCR-mediated signals are transmitted across the cell membrane by the CD3 chains CD3D, CD3E, CD3G and CD3Z. All CD3 chains contain immunoreceptor tyrosine-based activation motifs (ITAMs) in their cytoplasmic domain. Upon TCR engagement, these motifs become phosphorylated by Src family protein tyrosine kinases LCK and FYN, resulting in the activation of downstream signaling pathways. In addition to this role of signal transduction in T-cell activation, CD3G plays an essential role in the dynamic regulation of TCR expression at the cell surface. Indeed, constitutive TCR cycling is dependent on the di-leucine-based (diL) receptor-sorting motif present in CD3G. The chain is T-cell surface glycoprotein CD3 gamma chain (Cd3g) from Rattus norvegicus (Rat).